The sequence spans 137 residues: Large ribosomal subunit protein uL16 (137 aa).

Belongs to the universal ribosomal protein uL16 family. In terms of assembly, part of the 50S ribosomal subunit.

Binds 23S rRNA and is also seen to make contacts with the A and possibly P site tRNAs. The polypeptide is Large ribosomal subunit protein uL16 (Agrobacterium fabrum (strain C58 / ATCC 33970) (Agrobacterium tumefaciens (strain C58))).